Here is a 62-residue protein sequence, read N- to C-terminus: Synergistic-type venom protein C8S2, chain 1 (62 aa).

Intrachain disulfides connect cysteine 3-cysteine 24, cysteine 17-cysteine 42, and cysteine 46-cysteine 57.

The protein belongs to the three-finger toxin family. Short-chain subfamily. Aminergic toxin sub-subfamily. As to quaternary structure, heterodimer of C8S2 chain 1 and chain 2 (AC P01411); disulfide-linked. In terms of tissue distribution, expressed by the venom gland.

The protein localises to the secreted. In terms of biological role, this protein shows a synergetic toxic effect in that it enhances the toxicity of other toxins. The chain is Synergistic-type venom protein C8S2, chain 1 from Dendroaspis angusticeps (Eastern green mamba).